The chain runs to 398 residues: NADH-ubiquinone oxidoreductase 49 kDa subunit (398 aa).

Belongs to the complex I 49 kDa subunit family.

It localises to the mitochondrion. The enzyme catalyses a ubiquinone + NADH + 5 H(+)(in) = a ubiquinol + NAD(+) + 4 H(+)(out). Core subunit of the mitochondrial membrane respiratory chain NADH dehydrogenase (Complex I) that is believed to belong to the minimal assembly required for catalysis. Complex I functions in the transfer of electrons from NADH to the respiratory chain. The immediate electron acceptor for the enzyme is believed to be ubiquinone. Component of the iron-sulfur (IP) fragment of the enzyme. Component of the iron-sulfur (IP) fragment of the enzyme. This is NADH-ubiquinone oxidoreductase 49 kDa subunit (NAD7) from Pylaiella littoralis (Seaweed).